The following is a 111-amino-acid chain: Large ribosomal subunit protein uL23 (111 aa).

This sequence belongs to the universal ribosomal protein uL23 family. As to quaternary structure, part of the 50S ribosomal subunit. Contacts protein L29, and trigger factor when it is bound to the ribosome.

Functionally, one of the early assembly proteins it binds 23S rRNA. One of the proteins that surrounds the polypeptide exit tunnel on the outside of the ribosome. Forms the main docking site for trigger factor binding to the ribosome. The protein is Large ribosomal subunit protein uL23 of Chlamydia trachomatis serovar A (strain ATCC VR-571B / DSM 19440 / HAR-13).